A 267-amino-acid chain; its full sequence is uncharacterized protein (267 aa).

Residues 37 to 62 (DSSNNYKKKYKKYKRKYIDLKKQLNY) adopt a coiled-coil conformation.

This is an uncharacterized protein from Acanthamoeba polyphaga (Amoeba).